A 267-amino-acid polypeptide reads, in one-letter code: Cell division protein FtsQ (267 aa).

The Cytoplasmic segment spans residues 1-32; that stretch reads MRQKTISNKNKQTKNTNNISLRRKLGLMYKKA. Residues 33–53 traverse the membrane as a helical segment; sequence ILVLKIVLMIFVCLFVFTKYF. The Periplasmic segment spans residues 54–267; it reads TSIKTYLITN…DRNKYYIQKY (214 aa). Positions 73-141 constitute a POTRA domain; it reads FRLENVIIEG…NTVYIKLFER (69 aa).

Belongs to the FtsQ/DivIB family. FtsQ subfamily.

It localises to the cell inner membrane. Functionally, essential cell division protein. The sequence is that of Cell division protein FtsQ from Rickettsia prowazekii (strain Madrid E).